The chain runs to 409 residues: Aquaporin-10 (409 aa).

2 disordered regions span residues 1–24 (MADA…TTMP) and 47–74 (ADVN…RPLV). Low complexity predominate over residues 12-22 (TTGTATTAPTT). Transmembrane regions (helical) follow at residues 110–130 (FLGS…VVLS) and 138–158 (LSIN…AGGI). The NPA 1 signature appears at 164–166 (NPA). The helical transmembrane segment at 184–204 (VYMFAQYAGCICASAIVHAIY) threads the bilayer. N-linked (GlcNAc...) asparagine glycosylation occurs at N215. A run of 2 helical transmembrane segments spans residues 241-261 (TGLA…LALT) and 270-290 (GGVV…AYGF). The NPA 2 signature appears at 297 to 299 (NPA). A helical transmembrane segment spans residues 339-359 (IPVVGPHLGALLGAAIYFFFI).

It belongs to the MIP/aquaporin (TC 1.A.8) family.

It localises to the cell membrane. Aquaglyceroporin that may modulate the water content and osmolytes during anhydrobiosis. The polypeptide is Aquaporin-10 (Milnesium tardigradum (Water bear)).